Reading from the N-terminus, the 140-residue chain is uncharacterized protein (140 aa).

Asparagine 27 carries an N-linked (GlcNAc...) asparagine glycan. A run of 3 helical transmembrane segments spans residues 45 to 65 (FSLY…GVYA), 76 to 96 (VWIF…TGTV), and 116 to 136 (VPLC…YSMV).

This sequence belongs to the TMEM170 family.

The protein resides in the membrane. This is an uncharacterized protein from Saccharomyces cerevisiae (strain ATCC 204508 / S288c) (Baker's yeast).